Consider the following 303-residue polypeptide: 4-diphosphocytidyl-2-C-methyl-D-erythritol kinase (303 aa).

The active site involves Lys21. Residue Pro106–Ala116 coordinates ATP. Asp148 is an active-site residue.

This sequence belongs to the GHMP kinase family. IspE subfamily.

The catalysed reaction is 4-CDP-2-C-methyl-D-erythritol + ATP = 4-CDP-2-C-methyl-D-erythritol 2-phosphate + ADP + H(+). It participates in isoprenoid biosynthesis; isopentenyl diphosphate biosynthesis via DXP pathway; isopentenyl diphosphate from 1-deoxy-D-xylulose 5-phosphate: step 3/6. Catalyzes the phosphorylation of the position 2 hydroxy group of 4-diphosphocytidyl-2C-methyl-D-erythritol. This Nitrobacter hamburgensis (strain DSM 10229 / NCIMB 13809 / X14) protein is 4-diphosphocytidyl-2-C-methyl-D-erythritol kinase.